The following is a 448-amino-acid chain: MAEKKKKRVLILGAAGRDFHNFNVFFRDNPEYEVVAFTATQIPDIEGRIYPPELAGELYPNGIPIWSEDDMEKIIKEHDIDVVVFAYSDVSHEHVMHLASRAHSAGADFWLLGPKSTMLKSSKPVVAVTAVRTGCGKSQTSRKVAQLLQEMGYKVVAIRHPMPYGDLRKQVVQRFATFEDLDKYECTIEEREEYEPYIERGMVVYAGVDYEKILREAEKEADIILWDGGNNDFPFYEPDLWIVVTDPHRPGHELKYHPGETNFRAADVIIINKIDTANRDDIQKVRESIEKVNPNATVIEAASPIFVDKPELIKGKRVLVVEDGPTLTHGGMKYGAGYVAAKKFGAAEIIDPRPYAVGSIIETYKKYPHLDVILPAMGYGKKQIKELEETINRADADVVIMGTPVDLRRFMNLNKPAVRVKYELEEIGQPKLKEVLEEWAKNCEKLKK.

Probably forms homotetramers and higher assemblies of tetramers. Mg(2+) is required as a cofactor.

It catalyses the reaction L-arginine + ADP + phosphate + H(+) = L-citrulline + NH4(+) + ATP. It functions in the pathway amino-acid biosynthesis; L-proline biosynthesis. It participates in amino-acid degradation; L-arginine degradation. The protein operates within amino-acid biosynthesis; L-arginine biosynthesis. Its function is as follows. Arginine deiminase involved in an arginine synthetase pathway, which provides citrulline and ornithine, the precursors for proline biosynthesis. Catalyzes the conversion of L-arginine to citrulline while conserving the energy of arginine deimination to generate ATP from ADP and free phosphate. Is specific toward L-arginine and cannot use D-arginine, agmatine, guanidine, L-alanine-L-arginine dipeptide and L-arginine-L-alanine dipeptide. Can also use CDP, GDP or UDP, with lower activity (38%, 8.4% and 13.3%, respectively). The enzyme can also catalyze the reverse reaction: the ATP-dependent generation of arginine from citrulline in a single reaction by using free ammonia, without the requirement of aspartic acid. In vivo, most likely functions in the arginine catabolism to produce citrulline for proline biosynthesis while also generating ATP, but it can also contribute to arginine biosynthesis when the necessary precursors such as citrulline are abundant. The sequence is that of Arginine synthetase ArcE from Thermococcus kodakarensis (strain ATCC BAA-918 / JCM 12380 / KOD1) (Pyrococcus kodakaraensis (strain KOD1)).